Here is a 406-residue protein sequence, read N- to C-terminus: Cysteine desulfurase (406 aa).

N6-(pyridoxal phosphate)lysine is present on Lys226. The active-site Cysteine persulfide intermediate is Cys364.

This sequence belongs to the class-V pyridoxal-phosphate-dependent aminotransferase family. Csd subfamily. In terms of assembly, homodimer. Interacts with SufE and the SufBCD complex composed of SufB, SufC and SufD. The interaction with SufE is required to mediate the direct transfer of the sulfur atom from the S-sulfanylcysteine. It depends on pyridoxal 5'-phosphate as a cofactor.

It is found in the cytoplasm. It carries out the reaction (sulfur carrier)-H + L-cysteine = (sulfur carrier)-SH + L-alanine. The catalysed reaction is L-selenocysteine + AH2 = hydrogenselenide + L-alanine + A + H(+). Its pathway is cofactor biosynthesis; iron-sulfur cluster biosynthesis. Functionally, cysteine desulfurases mobilize the sulfur from L-cysteine to yield L-alanine, an essential step in sulfur metabolism for biosynthesis of a variety of sulfur-containing biomolecules. Component of the suf operon, which is activated and required under specific conditions such as oxidative stress and iron limitation. Acts as a potent selenocysteine lyase in vitro, that mobilizes selenium from L-selenocysteine. Selenocysteine lyase activity is however unsure in vivo. In Yersinia pseudotuberculosis serotype IB (strain PB1/+), this protein is Cysteine desulfurase.